The chain runs to 376 residues: Erythronate-4-phosphate dehydrogenase (376 aa).

Positions 45 and 67 each coordinate substrate. NAD(+) is bound at residue Asp147. Arg209 is a catalytic residue. Asp233 contacts NAD(+). Glu238 is an active-site residue. His255 (proton donor) is an active-site residue. Gly258 contacts NAD(+). Tyr259 contributes to the substrate binding site.

The protein belongs to the D-isomer specific 2-hydroxyacid dehydrogenase family. PdxB subfamily. Homodimer.

The protein resides in the cytoplasm. It catalyses the reaction 4-phospho-D-erythronate + NAD(+) = (R)-3-hydroxy-2-oxo-4-phosphooxybutanoate + NADH + H(+). Its pathway is cofactor biosynthesis; pyridoxine 5'-phosphate biosynthesis; pyridoxine 5'-phosphate from D-erythrose 4-phosphate: step 2/5. Catalyzes the oxidation of erythronate-4-phosphate to 3-hydroxy-2-oxo-4-phosphonooxybutanoate. This Shewanella sp. (strain ANA-3) protein is Erythronate-4-phosphate dehydrogenase.